We begin with the raw amino-acid sequence, 285 residues long: Acetylglutamate kinase (285 aa).

Residues 64-65 (GG), arginine 86, and asparagine 179 each bind substrate.

It belongs to the acetylglutamate kinase family. ArgB subfamily.

The protein resides in the plastid. It localises to the chloroplast. It carries out the reaction N-acetyl-L-glutamate + ATP = N-acetyl-L-glutamyl 5-phosphate + ADP. The protein operates within amino-acid biosynthesis; L-arginine biosynthesis; N(2)-acetyl-L-ornithine from L-glutamate: step 2/4. In terms of biological role, catalyzes the ATP-dependent phosphorylation of N-acetyl-L-glutamate. In Pyropia yezoensis (Susabi-nori), this protein is Acetylglutamate kinase.